Here is a 161-residue protein sequence, read N- to C-terminus: MTNGNGTPPEAAPAPQLNVLAQYTKDLSFENPNAPSSLQQQGQPPQINIQINVGANNLSEQEFEVTLSVEGKAETAGKVMFSFELAYAGVFRIVNVPKENLHPLVMIECPRLLFPFAREIIATAVRDGGFPPLMLDPVDFVGLYRQNMERQMAAGGQAGQA.

Belongs to the SecB family. Homotetramer, a dimer of dimers. One homotetramer interacts with 1 SecA dimer.

It localises to the cytoplasm. In terms of biological role, one of the proteins required for the normal export of preproteins out of the cell cytoplasm. It is a molecular chaperone that binds to a subset of precursor proteins, maintaining them in a translocation-competent state. It also specifically binds to its receptor SecA. This chain is Protein-export protein SecB, found in Bradyrhizobium diazoefficiens (strain JCM 10833 / BCRC 13528 / IAM 13628 / NBRC 14792 / USDA 110).